A 230-amino-acid chain; its full sequence is uncharacterized protein (230 aa).

A helical transmembrane segment spans residues 17 to 37 (AGALSLGIGFFALASALWFLI). An N-linked (GlcNAc...) asparagine glycan is attached at asparagine 126.

It localises to the membrane. This is an uncharacterized protein from Mus musculus (Mouse).